Consider the following 244-residue polypeptide: RNA transcription, translation and transport factor protein (244 aa).

N6-acetyllysine occurs at positions 20, 62, and 98.

This sequence belongs to the RTRAF family. Homodimer. Interacts with FAM98A (via N- and C-terminus). Interacts with NIN; which may prevent phosphorylation of NIN. Interacts with POLR2A. Component of a tRNA-splicing ligase complex.

Its subcellular location is the nucleus. It localises to the cytoplasm. The protein resides in the cytosol. It is found in the perinuclear region. The protein localises to the cytoskeleton. Its subcellular location is the microtubule organizing center. It localises to the centrosome. Functionally, RNA-binding protein involved in modulation of mRNA transcription by Polymerase II. Component of the tRNA-splicing ligase complex and is required for tRNA ligation. May be required for RNA transport. This Mus musculus (Mouse) protein is RNA transcription, translation and transport factor protein.